A 105-amino-acid polypeptide reads, in one-letter code: uncharacterized protein (105 aa).

The tract at residues 47–105 (ENASAPRIQPSVTPSPAAPPSTDQLMMEKMMGSAGLNKYRKQEKEKQEEDGNGESLFDF) is disordered. Over residues 86 to 95 (RKQEKEKQEE) the composition is skewed to basic and acidic residues.

This is an uncharacterized protein from Bacillus subtilis (strain 168).